A 1240-amino-acid polypeptide reads, in one-letter code: DNA polymerase catalytic subunit (1240 aa).

Residues M1 to G22 are compositionally biased toward low complexity. Disordered stretches follow at residues M1–N44, G646–G695, and A1103–P1139. Residues N669–E688 show a composition bias toward acidic residues.

The protein belongs to the DNA polymerase type-B family. As to quaternary structure, forms a complex with the ssDNA-binding protein UL29, the DNA polymerase processivity factor, and the alkaline exonuclease. Interacts with the putative helicase-primase complex subunit UL8; this interaction may coordinate leading and lagging strand DNA synthesis at the replication fork.

The protein resides in the host nucleus. The enzyme catalyses DNA(n) + a 2'-deoxyribonucleoside 5'-triphosphate = DNA(n+1) + diphosphate. It catalyses the reaction Endonucleolytic cleavage to 5'-phosphomonoester.. Its function is as follows. Replicates viral genomic DNA. The replication complex is composed of six viral proteins: the DNA polymerase, processivity factor, primase, primase-associated factor, helicase, and ssDNA-binding protein. Additionally, the polymerase contains an intrinsic ribonuclease H (RNase H) activity that specifically degrades RNA/DNA heteroduplexes or duplex DNA substrates in the 5' to 3' direction. Therefore, it can catalyze the excision of the RNA primers that initiate the synthesis of Okazaki fragments at a replication fork during viral DNA replication. This Human herpesvirus 2 (strain HG52) (HHV-2) protein is DNA polymerase catalytic subunit.